The chain runs to 364 residues: MQDRQKAQDYRALLLADTPLIDVRAPIEFEQGAMPGAINLPLMMDDERAAVGTCYKRQGADAALALGHRLVCGDIRQQRLEAWKAAYQRFPNGYLCCARGGQRSHIVQRWLQETGIDCPLIEGGYKALRQTAIQATWQLAQKPILLIGGCTGSGKTQLVRQQPNGVDLEGLARHRGSSFGRTLNPQLSQASFENKLAVELLKINARQTLKRWVLEDEGRTIGANHLPECLRERMAQAPIAVVEDPFALRLERLREEYFICMHHDFTHAYGDEAGWQAYSEYLHHGLFAIRRRLGLQRFAELTDTLDRALAEQLSSGSTDGHMAWLVPLLNEYYDPMYRYQLEKKAANIVFRGPWQDVANWLKAQ.

One can recognise a Rhodanese domain in the interval 14 to 137; the sequence is LLADTPLIDV…LRQTAIQATW (124 aa). The active-site S-selanylcysteine intermediate is the cysteine 97.

Belongs to the SelU family. In terms of assembly, monomer.

It carries out the reaction 5-methylaminomethyl-2-thiouridine(34) in tRNA + selenophosphate + (2E)-geranyl diphosphate + H2O + H(+) = 5-methylaminomethyl-2-selenouridine(34) in tRNA + (2E)-thiogeraniol + phosphate + diphosphate. The enzyme catalyses 5-methylaminomethyl-2-thiouridine(34) in tRNA + (2E)-geranyl diphosphate = 5-methylaminomethyl-S-(2E)-geranyl-thiouridine(34) in tRNA + diphosphate. The catalysed reaction is 5-methylaminomethyl-S-(2E)-geranyl-thiouridine(34) in tRNA + selenophosphate + H(+) = 5-methylaminomethyl-2-(Se-phospho)selenouridine(34) in tRNA + (2E)-thiogeraniol. It catalyses the reaction 5-methylaminomethyl-2-(Se-phospho)selenouridine(34) in tRNA + H2O = 5-methylaminomethyl-2-selenouridine(34) in tRNA + phosphate. Involved in the post-transcriptional modification of the uridine at the wobble position (U34) of tRNA(Lys), tRNA(Glu) and tRNA(Gln). Catalyzes the conversion of 2-thiouridine (S2U-RNA) to 2-selenouridine (Se2U-RNA). Acts in a two-step process involving geranylation of 2-thiouridine (S2U) to S-geranyl-2-thiouridine (geS2U) and subsequent selenation of the latter derivative to 2-selenouridine (Se2U) in the tRNA chain. This chain is tRNA 2-selenouridine synthase, found in Salmonella heidelberg (strain SL476).